A 334-amino-acid polypeptide reads, in one-letter code: Holliday junction branch migration complex subunit RuvB (334 aa).

Residues 1–181 (MQDRLISGTE…FGIVQRLEFY (181 aa)) form a large ATPase domain (RuvB-L) region. Residues isoleucine 20, arginine 21, glycine 62, lysine 65, threonine 66, threonine 67, 128 to 130 (EDY), arginine 171, tyrosine 181, and arginine 218 each bind ATP. Residue threonine 66 coordinates Mg(2+). A small ATPAse domain (RuvB-S) region spans residues 182–252 (SVEDLTHIVS…MAQRALDMLN (71 aa)). Residues 255–334 (KAGLDTLDRR…FGMTPPEPKN (80 aa)) form a head domain (RuvB-H) region. DNA is bound by residues arginine 310 and arginine 315.

This sequence belongs to the RuvB family. Homohexamer. Forms an RuvA(8)-RuvB(12)-Holliday junction (HJ) complex. HJ DNA is sandwiched between 2 RuvA tetramers; dsDNA enters through RuvA and exits via RuvB. An RuvB hexamer assembles on each DNA strand where it exits the tetramer. Each RuvB hexamer is contacted by two RuvA subunits (via domain III) on 2 adjacent RuvB subunits; this complex drives branch migration. In the full resolvosome a probable DNA-RuvA(4)-RuvB(12)-RuvC(2) complex forms which resolves the HJ.

Its subcellular location is the cytoplasm. The enzyme catalyses ATP + H2O = ADP + phosphate + H(+). The RuvA-RuvB-RuvC complex processes Holliday junction (HJ) DNA during genetic recombination and DNA repair, while the RuvA-RuvB complex plays an important role in the rescue of blocked DNA replication forks via replication fork reversal (RFR). RuvA specifically binds to HJ cruciform DNA, conferring on it an open structure. The RuvB hexamer acts as an ATP-dependent pump, pulling dsDNA into and through the RuvAB complex. RuvB forms 2 homohexamers on either side of HJ DNA bound by 1 or 2 RuvA tetramers; 4 subunits per hexamer contact DNA at a time. Coordinated motions by a converter formed by DNA-disengaged RuvB subunits stimulates ATP hydrolysis and nucleotide exchange. Immobilization of the converter enables RuvB to convert the ATP-contained energy into a lever motion, pulling 2 nucleotides of DNA out of the RuvA tetramer per ATP hydrolyzed, thus driving DNA branch migration. The RuvB motors rotate together with the DNA substrate, which together with the progressing nucleotide cycle form the mechanistic basis for DNA recombination by continuous HJ branch migration. Branch migration allows RuvC to scan DNA until it finds its consensus sequence, where it cleaves and resolves cruciform DNA. This Acinetobacter baumannii (strain AB307-0294) protein is Holliday junction branch migration complex subunit RuvB.